Consider the following 273-residue polypeptide: Glutamate transport system permease protein GluD (273 aa).

The next 5 helical transmembrane spans lie at 26–46 (ILPGLWGTLKSAVFSVILALV), 64–84 (WFCAVIIETFRAIPVLILMIF), 100–120 (LAFAAVVFGLTMYNGSVIAEI), 150–170 (ILLPQAVAAMLPALISQMVIA), and 200–220 (LAALFVVALIMIVLNFSLTAL). The 192-residue stretch at 30–221 (LWGTLKSAVF…VLNFSLTALA (192 aa)) folds into the ABC transmembrane type-1 domain. Positions 242-273 (PEQPDQGLETKDNVNVDWQDPDYKDLKTPGVQ) are disordered. Positions 262–273 (PDYKDLKTPGVQ) are enriched in basic and acidic residues.

It belongs to the binding-protein-dependent transport system permease family. HisMQ subfamily. The complex is composed of two ATP-binding proteins (GluA), two transmembrane proteins (GluC and GluD) and a solute-binding protein (GluB).

The protein localises to the cell membrane. Functionally, part of the ABC transporter complex GluABCD involved in glutamate uptake. Probably responsible for the translocation of the substrate across the membrane. This is Glutamate transport system permease protein GluD from Corynebacterium glutamicum (strain ATCC 13032 / DSM 20300 / JCM 1318 / BCRC 11384 / CCUG 27702 / LMG 3730 / NBRC 12168 / NCIMB 10025 / NRRL B-2784 / 534).